A 723-amino-acid chain; its full sequence is Heme/hemopexin utilization protein C (723 aa).

An N-terminal signal peptide occupies residues 1–21 (MRFSKLSLAITTTLVTANALA). Residues 36–147 (DPSRFAYTPE…LGGVVAMRTP (112 aa)) form the TBDR plug domain. Residues 158 to 723 (KFGVKIRQGY…NAKISAVYSF (566 aa)) form the TBDR beta-barrel domain. The TonB C-terminal box signature appears at 706–723 (SLMEGTGRNAKISAVYSF).

It belongs to the TonB-dependent receptor family.

Its subcellular location is the cell outer membrane. Functionally, required for utilization of free heme at low concentrations. The sequence is that of Heme/hemopexin utilization protein C (hxuC) from Haemophilus influenzae (strain ATCC 51907 / DSM 11121 / KW20 / Rd).